We begin with the raw amino-acid sequence, 489 residues long: Lysine--tRNA ligase (489 aa).

Positions 399 and 406 each coordinate Mg(2+).

It belongs to the class-II aminoacyl-tRNA synthetase family. Homodimer. It depends on Mg(2+) as a cofactor.

It localises to the cytoplasm. It carries out the reaction tRNA(Lys) + L-lysine + ATP = L-lysyl-tRNA(Lys) + AMP + diphosphate. In Roseiflexus sp. (strain RS-1), this protein is Lysine--tRNA ligase.